Consider the following 152-residue polypeptide: Large ribosomal subunit protein bL9 (152 aa).

This sequence belongs to the bacterial ribosomal protein bL9 family.

In terms of biological role, binds to the 23S rRNA. In Microcystis aeruginosa (strain NIES-843 / IAM M-2473), this protein is Large ribosomal subunit protein bL9.